A 229-amino-acid polypeptide reads, in one-letter code: Ribonuclease 3 (229 aa).

Residues 5-127 (LNRLERKLGH…LIGAIYLDAG (123 aa)) enclose the RNase III domain. Glu-40 provides a ligand contact to Mg(2+). Residue Asp-44 is part of the active site. Mg(2+) is bound by residues Asp-113 and Glu-116. Glu-116 is an active-site residue. One can recognise a DRBM domain in the interval 154–224 (DPKTRLQEFL…AAAALVALGV (71 aa)).

The protein belongs to the ribonuclease III family. Homodimer. It depends on Mg(2+) as a cofactor.

It localises to the cytoplasm. The catalysed reaction is Endonucleolytic cleavage to 5'-phosphomonoester.. Its function is as follows. Digests double-stranded RNA. Involved in the processing of primary rRNA transcript to yield the immediate precursors to the large and small rRNAs (23S and 16S). Processes some mRNAs, and tRNAs when they are encoded in the rRNA operon. Processes pre-crRNA and tracrRNA of type II CRISPR loci if present in the organism. This chain is Ribonuclease 3, found in Azotobacter vinelandii (strain DJ / ATCC BAA-1303).